Consider the following 204-residue polypeptide: Ribosome maturation factor RimM (204 aa).

One can recognise a PRC barrel domain in the interval 117–192 (DEDEFFSADL…EVTIDPPDDL (76 aa)).

Belongs to the RimM family. Binds ribosomal protein uS19.

The protein resides in the cytoplasm. Its function is as follows. An accessory protein needed during the final step in the assembly of 30S ribosomal subunit, possibly for assembly of the head region. Essential for efficient processing of 16S rRNA. May be needed both before and after RbfA during the maturation of 16S rRNA. It has affinity for free ribosomal 30S subunits but not for 70S ribosomes. The polypeptide is Ribosome maturation factor RimM (Methylobacterium nodulans (strain LMG 21967 / CNCM I-2342 / ORS 2060)).